We begin with the raw amino-acid sequence, 214 residues long: Ribosomal RNA small subunit methyltransferase G (214 aa).

Residues Gly-77, Leu-82, Val-128–Glu-129, and Arg-143 each bind S-adenosyl-L-methionine.

Belongs to the methyltransferase superfamily. RNA methyltransferase RsmG family.

It localises to the cytoplasm. The enzyme catalyses guanosine(527) in 16S rRNA + S-adenosyl-L-methionine = N(7)-methylguanosine(527) in 16S rRNA + S-adenosyl-L-homocysteine. Its function is as follows. Specifically methylates the N7 position of guanine in position 527 of 16S rRNA. This chain is Ribosomal RNA small subunit methyltransferase G, found in Nitrosomonas eutropha (strain DSM 101675 / C91 / Nm57).